Here is a 234-residue protein sequence, read N- to C-terminus: Synaptogyrin-1 (234 aa).

At Met-1 the chain carries N-acetylmethionine. Topologically, residues 1-23 are cytoplasmic; it reads MEGGAYGAGKAGGAFDPYALVRQ. An MARVEL domain is found at 20-173; sequence LVRQPHTILR…QAVLAFQRYQ (154 aa). Residues 24 to 44 form a helical membrane-spanning segment; it reads PHTILRVVSWLFSIVVFGSIV. Topologically, residues 45-71 are lumenal; it reads NEGYLNSASEGEEFCIYNRNPNACSYG. Residues 72–92 form a helical membrane-spanning segment; the sequence is VAVGVLAFLTCLLYLALDVYF. The Cytoplasmic portion of the chain corresponds to 93–103; the sequence is PQISSVKDRKK. Residues 104 to 124 traverse the membrane as a helical segment; sequence AVLSDIGVSAFWAFLWFVGFC. Residues 125–148 are Lumenal-facing; sequence YLANQWQVSKPKDNPLNEGTDAAR. Residues 149–169 form a helical membrane-spanning segment; sequence AAIAFSFFSIFTWAGQAVLAF. Topologically, residues 170 to 234 are cytoplasmic; it reads QRYQIGADSA…EPQGYQSQGY (65 aa). The tract at residues 192–234 is disordered; it reads SSMPYAPYVEPSTGPDPAGMGGTYQQPANTFDTEPQGYQSQGY. Polar residues predominate over residues 214–234; the sequence is TYQQPANTFDTEPQGYQSQGY.

The protein belongs to the synaptogyrin family.

The protein localises to the cytoplasmic vesicle. It localises to the secretory vesicle. Its subcellular location is the synaptic vesicle membrane. The protein resides in the melanosome. In terms of biological role, may play a role in regulated exocytosis. Modulates the localization of synaptophysin/SYP into synaptic-like microvesicles and may therefore play a role in synaptic-like microvesicle formation and/or maturation. Involved in the regulation of short-term and long-term synaptic plasticity. This Pongo abelii (Sumatran orangutan) protein is Synaptogyrin-1.